The primary structure comprises 300 residues: Transcription elongation factor A protein 2 (300 aa).

Residues 6–83 (EEIARIARRL…KSWKKLLDAS (78 aa)) enclose the TFIIS N-terminal domain. Lys58 is covalently cross-linked (Glycyl lysine isopeptide (Lys-Gly) (interchain with G-Cter in ubiquitin)). Residues Ser60 and Ser101 each carry the phosphoserine modification. A disordered region spans residues 84–131 (DAKARERRRGGSLPTSSSKEASEAQDPSRKRPELPRMPSTPRITTFPP). Over residues 103–117 (EASEAQDPSRKRPEL) the composition is skewed to basic and acidic residues. The TFIIS central domain occupies 139 to 255 (VRTKCREMLT…EHQMARTGGT (117 aa)). The segment at 258-298 (DLFTCGKCRKKNCTYTQVQTRSSDEPMTTFVVCNECGNRWK) adopts a TFIIS-type zinc-finger fold. Positions 262, 265, 290, and 293 each coordinate Zn(2+).

This sequence belongs to the TFS-II family. In terms of assembly, interacts with the basal transcription factor GTF2B. Interacts with REXO1.

It is found in the nucleus. Its function is as follows. Necessary for efficient RNA polymerase II transcription elongation past template-encoded arresting sites. The arresting sites in DNA have the property of trapping a certain fraction of elongating RNA polymerases that pass through, resulting in locked ternary complexes. Cleavage of the nascent transcript by S-II allows the resumption of elongation from the new 3'-terminus. The protein is Transcription elongation factor A protein 2 (TCEA2) of Bos taurus (Bovine).